The following is an 804-amino-acid chain: Cell surface sensor MSB2 (804 aa).

The first 20 residues, 1–20, serve as a signal peptide directing secretion; it reads MHNFSKLAVAFVAAASFASA. The Extracellular portion of the chain corresponds to 21-694; sequence EPETKAKVER…TNQSATQRGT (674 aa). N-linked (GlcNAc...) asparagine glycosylation is present at Asn-45. Composition is skewed to low complexity over residues 46-58 and 69-80; these read TTTPASEASSSTS and SSFSSSASSSSA. Disordered stretches follow at residues 46–90 and 105–220; these read TTTP…RQPT and TDST…ATSN. The tract at residues 46 to 475 is serine/threonine rich region (STR); that stretch reads TTTPASEASS…SVAPTSATSS (430 aa). Polar residues-rich tracts occupy residues 81–90 and 109–126; these read QELTASRQPT and PFSQRPATSGAGRSSATG. 2 stretches are compositionally biased toward low complexity: residues 128 to 143 and 150 to 169; these read VTPIIVPSSASPPSTA and SALTTSQNSTSAATSESVTS. An N-linked (GlcNAc...) asparagine glycan is attached at Asn-157. Over residues 170–188 the composition is skewed to polar residues; it reads PGSTSGPAGTPESSSASDF. A compositionally biased stretch (low complexity) spans 189–202; that stretch reads TSAVATSRASTATS. N-linked (GlcNAc...) asparagine glycosylation is found at Asn-298, Asn-308, Asn-357, and Asn-393. Residues 345-394 are compositionally biased toward polar residues; that stretch reads VQTLPPVSTPTANGTVTSPPVDSQTTVLPTTTPGLSSDTIVTSPGVTANS. The interval 345-516 is disordered; that stretch reads VQTLPPVSTP…APTVLPSDLP (172 aa). Composition is skewed to low complexity over residues 395–407 and 427–476; these read TQVPTTVPTTIPT and NNTV…TSSA. N-linked (GlcNAc...) asparagine glycans are attached at residues Asn-427 and Asn-433. The segment at 482 to 641 is HKR11-MSB2 homology domain (HMH); the sequence is WLPTTIIVQA…NGMLAHNLTM (160 aa). Over residues 493–508 the composition is skewed to polar residues; the sequence is LPSTTGSSTNAPSSAP. Residues Asn-629, Asn-638, Asn-669, Asn-683, and Asn-686 are each glycosylated (N-linked (GlcNAc...) asparagine). The segment at 658–689 is disordered; it reads KPAGAGSGTGGNGSNGPNDVFNNDNNSTNQSA. Residues 660 to 671 show a composition bias toward gly residues; the sequence is AGAGSGTGGNGS. Residues 672 to 686 show a composition bias toward low complexity; it reads NGPNDVFNNDNNSTN. The chain crosses the membrane as a helical span at residues 695–715; it reads VAGIAFGAVSLAAAYGAAMFI. Over 716–804 the chain is Cytoplasmic; it reads VARRYKKKRQ…VAQENSLGWN (89 aa). 2 disordered regions span residues 724–748 and 762–804; these read RQAHRRSSSVATPSEMRQSGSPALM and GVMG…LGWN. Residues 731-744 are compositionally biased toward polar residues; it reads SSVATPSEMRQSGS. The span at 774 to 787 shows a compositional bias: low complexity; the sequence is GSNGSGRSAGNSAR.

Belongs to the HKR1/MSB2 family.

The protein resides in the cell membrane. Its subcellular location is the vacuole membrane. Its function is as follows. MSB2 and SHO1 have overlapping functions in recognizing various surface signals for MAPK PMK1 activation and appressorium formation. While MSB2 is critical for sensing surface hydrophobicity and cutin monomers, SHO1 may play a more important role in recognizing rice leaf waxes. This is Cell surface sensor MSB2 from Pyricularia oryzae (strain 70-15 / ATCC MYA-4617 / FGSC 8958) (Rice blast fungus).